Consider the following 616-residue polypeptide: D-glucuronyl C5-epimerase (616 aa).

Over 1 to 12 (MKCLRWRSNRHR) the chain is Cytoplasmic. Residues 13 to 29 (IYLLVACGALFLLNRHL) traverse the membrane as a helical; Signal-anchor for type II membrane protein segment. Over 30–616 (TQEESRIDEE…YAYGKRAKHN (587 aa)) the chain is Extracellular. Substrate is bound by residues Tyr-136, 141-143 (RDR), and Gln-169. Asn-188, Asn-232, Asn-267, and Asn-471 each carry an N-linked (GlcNAc...) asparagine glycan. Substrate contacts are provided by residues Tyr-504, Arg-562, and 574 to 580 (RWDYHAV).

It belongs to the D-glucuronyl C5-epimerase family. As to quaternary structure, homodimer. Expression in comma stage embryos is strong in the hypodermis and intestine and weaker in the head region. In late embryos, larval, and adult stages, expressed primarily in hypodermis and intestine.

Its subcellular location is the cell membrane. It is found in the secreted. It localises to the extracellular space. The protein resides in the extracellular matrix. The protein localises to the basement membrane. It catalyses the reaction [heparosan-N-sulfate](n) = [heparan-N-sulfate](n). Its pathway is glycan metabolism; heparan sulfate biosynthesis. It functions in the pathway glycan metabolism; heparin biosynthesis. Converts D-glucuronic acid residues adjacent to N-sulfate sugar residues to L-iduronic acids. Plays a role in the early migration of AQR and PQR neurons, which descend from the Q neuroblasts. The sequence is that of D-glucuronyl C5-epimerase (hse-5) from Caenorhabditis elegans.